A 411-amino-acid chain; its full sequence is Probable 26S proteasome regulatory subunit rpn-6.2 (411 aa).

Positions 212–381 constitute a PCI domain; the sequence is YKTSFSYFYE…DTVVIYPKAG (170 aa).

Belongs to the proteasome subunit S9 family. In terms of assembly, component of the lid subcomplex of the 19S proteasome regulatory particle complex (also named PA700 complex). The 26S proteasome consists of a 20S proteasome core and two 19S regulatory subunits.

Component of the lid subcomplex of the 26S proteasome, a multiprotein complex involved in the ATP-dependent degradation of ubiquitinated proteins. In the complex, rpn-6.2 is required for proteasome assembly. This chain is Probable 26S proteasome regulatory subunit rpn-6.2, found in Caenorhabditis briggsae.